Here is a 129-residue protein sequence, read N- to C-terminus: C-type natriuretic peptide 1 (129 aa).

Residues 1–24 (MSYKRGTCLGFIMLLMVSHHHTKG) form the signal peptide. A propeptide spanning residues 25–107 (KPLSSLQNLS…SRRYRQRNKK (83 aa)) is cleaved from the precursor. A disulfide bond links Cys113 and Cys129.

Belongs to the natriuretic peptide family.

The protein resides in the secreted. Its function is as follows. Hormone which plays a role in endochondral ossification through regulation of cartilaginous growth plate chondrocytes proliferation and differentiation. May also be vasoactive and natriuretic. May be important for freshwater adaptation. This is C-type natriuretic peptide 1 from Aquarana catesbeiana (American bullfrog).